The sequence spans 423 residues: UPF0229 protein PLES_05841 (423 aa).

Positions 84–107 (AGEHIARPSGGGGGRGGGKASNSG) are disordered. The segment covering 92–102 (SGGGGGRGGGK) has biased composition (gly residues).

This sequence belongs to the UPF0229 family.

This is UPF0229 protein PLES_05841 from Pseudomonas aeruginosa (strain LESB58).